Here is a 214-residue protein sequence, read N- to C-terminus: Orotate phosphoribosyltransferase (214 aa).

Lys-26 is a 5-phospho-alpha-D-ribose 1-diphosphate binding site. 34 to 35 is an orotate binding site; it reads FF. Residues 72–73, Arg-99, Lys-100, Lys-103, His-105, and 124–132 each bind 5-phospho-alpha-D-ribose 1-diphosphate; these read YK and DDVITAGTA. Positions 128 and 156 each coordinate orotate.

It belongs to the purine/pyrimidine phosphoribosyltransferase family. PyrE subfamily. In terms of assembly, homodimer. Mg(2+) serves as cofactor.

It catalyses the reaction orotidine 5'-phosphate + diphosphate = orotate + 5-phospho-alpha-D-ribose 1-diphosphate. It participates in pyrimidine metabolism; UMP biosynthesis via de novo pathway; UMP from orotate: step 1/2. Catalyzes the transfer of a ribosyl phosphate group from 5-phosphoribose 1-diphosphate to orotate, leading to the formation of orotidine monophosphate (OMP). This is Orotate phosphoribosyltransferase from Proteus mirabilis (strain HI4320).